Consider the following 462-residue polypeptide: Glycine--tRNA ligase (462 aa).

Positions 100 and 174 each coordinate substrate. ATP contacts are provided by residues 206–208 (RNE), 216–221 (FRTREF), 290–291 (EL), and 334–337 (GVDR). 221 to 225 (FEQME) contributes to the substrate binding site. 330 to 334 (EPSVG) lines the substrate pocket.

The protein belongs to the class-II aminoacyl-tRNA synthetase family. As to quaternary structure, homodimer.

Its subcellular location is the cytoplasm. The catalysed reaction is tRNA(Gly) + glycine + ATP = glycyl-tRNA(Gly) + AMP + diphosphate. Functionally, catalyzes the attachment of glycine to tRNA(Gly). This chain is Glycine--tRNA ligase, found in Alkaliphilus oremlandii (strain OhILAs) (Clostridium oremlandii (strain OhILAs)).